The primary structure comprises 352 residues: ATP synthase subunit a 2 (352 aa).

The first 26 residues, 1–26 (MRKKAISRILALVVPVLLSLNSQAFA), serve as a signal peptide directing secretion. 7 helical membrane-spanning segments follow: residues 112–132 (VVMI…AGAS), 172–192 (FLPY…LGLI), 195–215 (GATA…TFVI), 232–252 (HLTA…EILG), 264–284 (LFAN…ISFI), 289–309 (IVAV…ELFV), and 310–330 (AFLQ…LATA).

Belongs to the ATPase A chain family. In terms of assembly, F-type ATPases have 2 components, CF(1) - the catalytic core - and CF(0) - the membrane proton channel. CF(1) has five subunits: alpha(3), beta(3), gamma(1), delta(1), epsilon(1). CF(0) has four main subunits: a, b, b' and c.

Its subcellular location is the cell inner membrane. In terms of biological role, key component of the proton channel; it plays a direct role in the translocation of protons across the membrane. The protein is ATP synthase subunit a 2 of Chlorobaculum tepidum (strain ATCC 49652 / DSM 12025 / NBRC 103806 / TLS) (Chlorobium tepidum).